The primary structure comprises 698 residues: Polyribonucleotide nucleotidyltransferase (698 aa).

Positions 490 and 496 each coordinate Mg(2+). Residues 558 to 617 enclose the KH domain; sequence PVIYTMRIPQDKIGALIGPGGKNIKRITETTDTKIDINDDGVVQIAAVNGDKLAMAKAEI. The S1 motif domain maps to 627–695; sequence NKIYKGKVVS…NNGKVRLSRK (69 aa).

The protein belongs to the polyribonucleotide nucleotidyltransferase family. The cofactor is Mg(2+).

It is found in the cytoplasm. It carries out the reaction RNA(n+1) + phosphate = RNA(n) + a ribonucleoside 5'-diphosphate. Functionally, involved in mRNA degradation. Catalyzes the phosphorolysis of single-stranded polyribonucleotides processively in the 3'- to 5'-direction. The protein is Polyribonucleotide nucleotidyltransferase of Elusimicrobium minutum (strain Pei191).